Consider the following 145-residue polypeptide: MRQTFMANESNIERKWYVIDAEGQTLGRLSSEVASILRGKNKVTYTPHVDTGDYVIVINASKIEFTGNKETDKVYYRHSNHPGGIKSITAGELRRTNPERLIENSIKGMLPSTRLGEKQGKKLFVYGGAEHPHAAQQPENYELRG.

It belongs to the universal ribosomal protein uL13 family. In terms of assembly, part of the 50S ribosomal subunit.

In terms of biological role, this protein is one of the early assembly proteins of the 50S ribosomal subunit, although it is not seen to bind rRNA by itself. It is important during the early stages of 50S assembly. This chain is Large ribosomal subunit protein uL13, found in Staphylococcus aureus (strain Mu3 / ATCC 700698).